A 291-amino-acid polypeptide reads, in one-letter code: MASLKELKGRIVSVKSTQKITKAKKMVAAAKLRKAQAAAEAARPYAERLEGVVASLASKVGASDSAPKLLSGTGKSDTHLLVVLNSDRGLAGAFNSNIVKAARDKALELQSQGKKVLFYLVGRKGRPVIARLFPGQIIEQYDTTGIRDIGFDQASEISARVMELYEAGAFDVAHLFYSKFRSALLQIATGQQMIPVPPPAEAPASSGAAVEYEPGEEEILADLLPRNVTIQIFKGLLENAASEQGASMTAMDNATRNAGELINKLTIIYNRTRQAAITTELIEIIAGAEAL.

Belongs to the ATPase gamma chain family. As to quaternary structure, F-type ATPases have 2 components, CF(1) - the catalytic core - and CF(0) - the membrane proton channel. CF(1) has five subunits: alpha(3), beta(3), gamma(1), delta(1), epsilon(1). CF(0) has three main subunits: a, b and c.

It localises to the cell inner membrane. Its function is as follows. Produces ATP from ADP in the presence of a proton gradient across the membrane. The gamma chain is believed to be important in regulating ATPase activity and the flow of protons through the CF(0) complex. This chain is ATP synthase gamma chain, found in Sphingopyxis alaskensis (strain DSM 13593 / LMG 18877 / RB2256) (Sphingomonas alaskensis).